The primary structure comprises 755 residues: Subtilisin-like protease 4 (755 aa).

An N-terminal signal peptide occupies residues 1–20 (MDYFLFIALTFLLTFHVHNA). The region spanning 41–119 (YIIHVTGPEG…ISAHPQRVLH (79 aa)) is the Inhibitor I9 domain. Positions 128 to 611 (FLGLQQDTGV…SGHVNPSRAN (484 aa)) constitute a Peptidase S8 domain. The active-site Charge relay system is aspartate 153. Asparagine 182 carries an N-linked (GlcNAc...) asparagine glycan. The active-site Charge relay system is the histidine 217. N-linked (GlcNAc...) asparagine glycans are attached at residues asparagine 297, asparagine 325, asparagine 393, asparagine 468, and asparagine 529. Positions 376–461 (PLAYAGKNGK…ATHVSYAAGI (86 aa)) constitute a PA domain. The active-site Charge relay system is serine 544. N-linked (GlcNAc...) asparagine glycans are attached at residues asparagine 706 and asparagine 727.

This sequence belongs to the peptidase S8 family.

It is found in the secreted. The protein localises to the extracellular space. It localises to the apoplast. Its function is as follows. Required for arbuscular mycorrhiza (AM) development during AM symbiosis with AM fungi (e.g. Glomeromycota intraradices). This is Subtilisin-like protease 4 from Lotus japonicus (Lotus corniculatus var. japonicus).